The chain runs to 173 residues: RNA pyrophosphohydrolase (173 aa).

The region spanning G6 to R149 is the Nudix hydrolase domain. The Nudix box motif lies at G38–G59.

It belongs to the Nudix hydrolase family. RppH subfamily. It depends on a divalent metal cation as a cofactor.

Functionally, accelerates the degradation of transcripts by removing pyrophosphate from the 5'-end of triphosphorylated RNA, leading to a more labile monophosphorylated state that can stimulate subsequent ribonuclease cleavage. The sequence is that of RNA pyrophosphohydrolase from Psychrobacter sp. (strain PRwf-1).